A 357-amino-acid chain; its full sequence is tRNA-specific 2-thiouridylase MnmA (357 aa).

Residues 3–10 (AMSGGVDS) and Leu29 contribute to the ATP site. Cys98 serves as the catalytic Nucleophile. A disulfide bond links Cys98 and Cys196. Position 122 (Gly122) interacts with ATP. The tract at residues 146 to 148 (KDQ) is interaction with tRNA. The active-site Cysteine persulfide intermediate is Cys196. Residues 302-303 (RY) form an interaction with tRNA region.

This sequence belongs to the MnmA/TRMU family.

The protein localises to the cytoplasm. The enzyme catalyses S-sulfanyl-L-cysteinyl-[protein] + uridine(34) in tRNA + AH2 + ATP = 2-thiouridine(34) in tRNA + L-cysteinyl-[protein] + A + AMP + diphosphate + H(+). Its function is as follows. Catalyzes the 2-thiolation of uridine at the wobble position (U34) of tRNA, leading to the formation of s(2)U34. The chain is tRNA-specific 2-thiouridylase MnmA from Moorella thermoacetica (strain ATCC 39073 / JCM 9320).